Consider the following 581-residue polypeptide: Frizzled-8 (581 aa).

Residues 1–23 (MESLSLSLLLLVSWLQGSQCAAA) form the signal peptide. One can recognise an FZ domain in the interval 24–144 (KELSCQEITV…GNPDTLCMDY (121 aa)). The Extracellular portion of the chain corresponds to 24–239 (KELSCQEITV…PEERTFTEFW (216 aa)). 5 disulfides stabilise this stretch: C28–C89, C36–C82, C73–C111, C100–C141, and C104–C128. N-linked (GlcNAc...) asparagine glycosylation occurs at N42. 64–71 (QFWPLVVI) contacts hexadecanoate. The wnt-binding stretch occupies residues 88–93 (ICLEDY). Residues 140–146 (LCMDYYN) are wnt-binding. An N-linked (GlcNAc...) asparagine glycan is attached at N146. The disordered stretch occupies residues 151–189 (TTAAPSHPEPPKPPARSVPKGRTRVEPPRSRSRATGCES). Pro residues predominate over residues 157 to 166 (HPEPPKPPAR). Residues 240–260 (IGLWSVLCFASTFATVSTFLI) form a helical membrane-spanning segment. At 261-271 (DMERFKYPERP) the chain is on the cytoplasmic side. The chain crosses the membrane as a helical span at residues 272–292 (IIFLSACYLLVSTGYLIRLIA). Residues 293–320 (GHEKVACSRGELDLEHIIHYETTGPALC) are Extracellular-facing. Residues 321–341 (TLVFLLIYFFGMASSIWWVIL) form a helical membrane-spanning segment. Over 342–377 (SLTWFLAAGMKWGNEAIAGYSQYFHLAAWLVPSIKS) the chain is Cytoplasmic. Residues 378-398 (IAVLALSSVDGDPVAGICFVG) traverse the membrane as a helical segment. Residues 399–407 (NQNLDNLRG) are Extracellular-facing. Residues 408 to 428 (FVLAPLVIYLFIGSMFLLAGF) traverse the membrane as a helical segment. At 429–454 (VSLFRIRSVIKQGGTKTDKLEKLMIR) the chain is on the cytoplasmic side. A helical transmembrane segment spans residues 455 to 475 (IGIFSVLYTVPATIVVACFFY). Residues 476-505 (EQHNRQGWEVAHNCNSCQPEMAQPHRPDYA) are Extracellular-facing. The chain crosses the membrane as a helical span at residues 506-526 (VFMLKYFMCLVVGITSGVWIW). Residues 527 to 581 (SGKTLESWRAFCTRCCWGSKATGGSMYSDVSTGLTWRSGTGSSVSCPKQMPLSQV) lie on the Cytoplasmic side of the membrane. The short motif at 529–534 (KTLESW) is the Lys-Thr-X-X-X-Trp motif, mediates interaction with the PDZ domain of Dvl family members element. A PDZ-binding motif is present at residues 579 to 581 (SQV).

Belongs to the G-protein coupled receptor Fz/Smo family. In terms of assembly, interacts with lypd6 and the interaction is strongly enhanced by wnt3a.

Its subcellular location is the membrane. It localises to the cell membrane. Receptor for Wnt proteins. Most of frizzled receptors are coupled to the beta-catenin canonical signaling pathway, which leads to the activation of disheveled proteins, inhibition of GSK-3 kinase, nuclear accumulation of beta-catenin and activation of Wnt target genes. A second signaling pathway involving PKC and calcium fluxes has been seen for some family members, but it is not yet clear if it represents a distinct pathway or if it can be integrated in the canonical pathway, as PKC seems to be required for Wnt-mediated inactivation of GSK-3 kinase. Both pathways seem to involve interactions with G-proteins. May be involved in transduction and intercellular transmission of polarity information during tissue morphogenesis and/or in differentiated tissues. Activation by Wnt8, Wnt5A or Wnt3A induces expression of beta-catenin target genes. Displays an axis-inducing activity. This is Frizzled-8 (fzd8) from Xenopus laevis (African clawed frog).